A 367-amino-acid chain; its full sequence is Metacaspase-1 (367 aa).

Residues 47-77 (DPRTAPPPQPSSAPSPPPQIHAPPGQLPHPH) are disordered. Positions 50-73 (TAPPPQPSSAPSPPPQIHAPPGQL) are enriched in pro residues. Catalysis depends on residues His164 and Cys220.

The protein belongs to the peptidase C14B family. Interacts (via N-terminus) with LSD1. Proteolytically processed; by an autocatalytic mechanism.

In terms of biological role, cysteine protease that cleaves specifically after arginine or lysine residues. Does not cleave caspase-specific substrates. Acts as a positive regulator of cell death. Required for both oxidative stress cell death response and hypersensitive cell death response mediated by immune response. This Arabidopsis thaliana (Mouse-ear cress) protein is Metacaspase-1 (AMC1).